The chain runs to 1107 residues: Enolase-phosphatase E1 (1107 aa).

2 residues coordinate Mg(2+): D19 and E21. Substrate contacts are provided by residues 152-153 (SS) and K186. Residue D211 coordinates Mg(2+). The tract at residues 258 to 1107 (SVKSTETENG…SATPSVETES (850 aa)) is disordered. The segment covering 260–289 (KSTETENGAEKETVTESTEKVADESEKETE) has biased composition (basic and acidic residues). The segment covering 291-306 (ETAAAETENGAEAENG) has biased composition (low complexity). Residues 366–376 (DAMDVDAEMTD) show a composition bias toward acidic residues. Basic and acidic residues-rich tracts occupy residues 393 to 427 (VTEK…DTKQ) and 435 to 462 (GEDK…KEEE). Residues 475–485 (DKMDVDEEDSA) are compositionally biased toward acidic residues. Basic and acidic residues-rich tracts occupy residues 486–512 (VIEK…KEEN), 534–548 (DETK…KEES), 572–586 (TVEK…SKSE), 593–604 (TSEKKVEDKSAN), 610–686 (KEPK…EVKA), and 693–776 (DESK…KSVD). The span at 794 to 803 (EETSATTEAQ) shows a compositional bias: low complexity. Composition is skewed to basic and acidic residues over residues 804 to 838 (ATKE…DAKS) and 849 to 908 (KEMK…ETKG). Residues 909–919 (VEATTAGPVEE) show a composition bias toward low complexity. The segment covering 920-935 (VAVEATEEDVAMEAES) has biased composition (acidic residues). Composition is skewed to basic and acidic residues over residues 937–957 (DAVK…KLDS), 1001–1028 (DEVK…EADS), and 1035–1047 (NHDE…KEND). The segment covering 1048 to 1083 (TSASNIEEASSATTTTTNGTSTESDSSSTTPSSETV) has biased composition (low complexity).

It belongs to the HAD-like hydrolase superfamily. MasA/MtnC family. In terms of assembly, monomer. Requires Mg(2+) as cofactor.

It is found in the cytoplasm. The protein localises to the nucleus. The catalysed reaction is 5-methylsulfanyl-2,3-dioxopentyl phosphate + H2O = 1,2-dihydroxy-5-(methylsulfanyl)pent-1-en-3-one + phosphate. It functions in the pathway amino-acid biosynthesis; L-methionine biosynthesis via salvage pathway; L-methionine from S-methyl-5-thio-alpha-D-ribose 1-phosphate: step 3/6. It participates in amino-acid biosynthesis; L-methionine biosynthesis via salvage pathway; L-methionine from S-methyl-5-thio-alpha-D-ribose 1-phosphate: step 4/6. Bifunctional enzyme that catalyzes the enolization of 2,3-diketo-5-methylthiopentyl-1-phosphate (DK-MTP-1-P) into the intermediate 2-hydroxy-3-keto-5-methylthiopentenyl-1-phosphate (HK-MTPenyl-1-P), which is then dephosphorylated to form the acireductone 1,2-dihydroxy-3-keto-5-methylthiopentene (DHK-MTPene). The sequence is that of Enolase-phosphatase E1 from Aedes aegypti (Yellowfever mosquito).